A 182-amino-acid chain; its full sequence is MNNRWILHAAFLLCFSTTALSINYKQLQLQERTNIRKCQELLEQLNGKINLTYRADFKIPMEMTEKMQKSYTAFAIQEMLQNVFLVFRNNFSSTGWNETIVVRLLDELHQQTVFLKTVLEEKQEERLTWEMSSTALHLKSYYWRVQRYLKLMKYNSYAWMVVRAEIFRNFLIIRRLTRNFQN.

The first 21 residues, 1-21 (MNNRWILHAAFLLCFSTTALS), serve as a signal peptide directing secretion. Tyrosine 24 is subject to Phosphotyrosine. Residues asparagine 50, asparagine 90, and asparagine 97 are each glycosylated (N-linked (GlcNAc...) asparagine).

The protein belongs to the alpha/beta interferon family. As to quaternary structure, monomer. Post-translationally, this beta interferon does not have a disulfide bond.

It localises to the secreted. Type I interferon cytokine that plays a key role in the innate immune response to infection, developing tumors and other inflammatory stimuli. Signals via binding to high-affinity (IFNAR2) and low-affinity (IFNAR1) heterodimeric receptor, activating the canonical Jak-STAT signaling pathway resulting in transcriptional activation or repression of interferon-regulated genes that encode the effectors of the interferon response, such as antiviral proteins, regulators of cell proliferation and differentiation, and immunoregulatory proteins. Signals mostly via binding to a IFNAR1-IFNAR2 heterodimeric receptor, but can also function with IFNAR1 alone and independently of Jak-STAT pathways. Elicits a wide variety of responses, including antiviral and antibacterial activities, and can regulate the development of B-cells, myelopoiesis and lipopolysaccharide (LPS)-inducible production of tumor necrosis factor. Plays a role in neuronal homeostasis by regulating dopamine turnover and protecting dopaminergic neurons: acts by promoting neuronal autophagy and alpha-synuclein clearance, thereby preventing dopaminergic neuron loss. IFNB1 is more potent than interferon-alpha (IFN-alpha) in inducing the apoptotic and antiproliferative pathways required for control of tumor cell growth. This Mus musculus (Mouse) protein is Interferon beta.